A 240-amino-acid chain; its full sequence is Protein YIPF6 (240 aa).

Over 1–91 (MVVSHLNRTV…PKKSSALLRD (91 aa)) the chain is Cytoplasmic. A helical membrane pass occupies residues 92–112 (WDLWGPLLLCVTLALMLQGGS). Topologically, residues 113–125 (ADSEEDGRPQFAE) are lumenal. Residues 126–146 (VFVIIWFGSVIITLNSKLLGG) form a helical membrane-spanning segment. The Cytoplasmic portion of the chain corresponds to 147 to 149 (TIS). The helical transmembrane segment at 150 to 170 (FFQSLCVLGYCILPLTVAMIV) threads the bilayer. The Lumenal portion of the chain corresponds to 171-172 (CR). The chain crosses the membrane as a helical span at residues 173–193 (IVLLGGSGVVSFAVRLIVVTA). The Cytoplasmic portion of the chain corresponds to 194 to 215 (SFSWSTFASTAFLADSQPTNRK). Residues 216–236 (ALVVYPVFLFYFVIGWMILTF) traverse the membrane as a helical segment. Topologically, residues 237–240 (SPSH) are lumenal.

The protein belongs to the YIP1 family.

It localises to the golgi apparatus membrane. The chain is Protein YIPF6 (yipf6) from Danio rerio (Zebrafish).